The following is a 295-amino-acid chain: Regucalcin (295 aa).

Residue glutamate 18 participates in a divalent metal cation binding. The substrate site is built by arginine 100, asparagine 102, and aspartate 120. Positions 150 and 200 each coordinate a divalent metal cation. Aspartate 200 serves as the catalytic Proton donor/acceptor.

Belongs to the SMP-30/CGR1 family. Zn(2+) serves as cofactor. Requires Mn(2+) as cofactor. The cofactor is Ca(2+). Mg(2+) is required as a cofactor.

Its subcellular location is the cytoplasm. The catalysed reaction is D-glucono-1,5-lactone + H2O = D-gluconate + H(+). The protein operates within cofactor biosynthesis; L-ascorbate biosynthesis via UDP-alpha-D-glucuronate pathway; L-ascorbate from UDP-alpha-D-glucuronate: step 3/4. In terms of biological role, gluconolactonase with low activity towards other sugar lactones, including gulonolactone and galactonolactone. Catalyzes a key step in ascorbic acid (vitamin C) biosynthesis. Can also hydrolyze diisopropyl phosphorofluoridate and phenylacetate (in vitro). Calcium-binding protein. Modulates Ca(2+) signaling, and Ca(2+)-dependent cellular processes and enzyme activities. The protein is Regucalcin of Danio rerio (Zebrafish).